A 637-amino-acid polypeptide reads, in one-letter code: Chaperone protein DnaK (637 aa).

Position 198 is a phosphothreonine; by autocatalysis (Thr198). The segment at 597–637 is disordered; that stretch reads MYQQQAEGDAARDAAQDAAKDDVVDAEFTEVDDDKNDKKSA. Positions 605–619 are enriched in basic and acidic residues; the sequence is DAARDAAQDAAKDDV. The segment covering 620–630 has biased composition (acidic residues); that stretch reads VDAEFTEVDDD.

It belongs to the heat shock protein 70 family.

Functionally, acts as a chaperone. The sequence is that of Chaperone protein DnaK from Afipia carboxidovorans (strain ATCC 49405 / DSM 1227 / KCTC 32145 / OM5) (Oligotropha carboxidovorans).